A 364-amino-acid chain; its full sequence is Spermidine/putrescine import ATP-binding protein PotA (364 aa).

An ABC transporter domain is found at 5 to 235 (LSFKSVSKQY…PVNRFVADFI (231 aa)). Position 37-44 (37-44 (GPSGCGKT)) interacts with ATP.

It belongs to the ABC transporter superfamily. Spermidine/putrescine importer (TC 3.A.1.11.1) family. The complex is composed of two ATP-binding proteins (PotA), two transmembrane proteins (PotB and PotC) and a solute-binding protein (PotD).

The protein resides in the cell membrane. It catalyses the reaction ATP + H2O + polyamine-[polyamine-binding protein]Side 1 = ADP + phosphate + polyamineSide 2 + [polyamine-binding protein]Side 1.. In terms of biological role, part of the ABC transporter complex PotABCD involved in spermidine/putrescine import. Responsible for energy coupling to the transport system. The chain is Spermidine/putrescine import ATP-binding protein PotA from Staphylococcus saprophyticus subsp. saprophyticus (strain ATCC 15305 / DSM 20229 / NCIMB 8711 / NCTC 7292 / S-41).